We begin with the raw amino-acid sequence, 315 residues long: Transcription repressor OFP7 (315 aa).

Residues 113-183 (YETPRRKIYN…ELPRVTRRPR (71 aa)) form a disordered region. Over residues 130–145 (RRRLKKKEKSNSRRRG) the composition is skewed to basic residues. Over residues 160-174 (LPSSTNLSPEYSSSE) the composition is skewed to polar residues. Residues 230 to 289 (VVKKSEDPYEDFKGSMMEMIVEKKMFEVAELEQLLSCFLSLNAKRHHRAIVRAFSEIWVA) enclose the OVATE domain.

In terms of tissue distribution, expressed in roots, shoots, stems, flower buds and siliques.

Its subcellular location is the nucleus. Functionally, transcriptional repressor that regulates multiple aspects of plant growth and development through the regulation of BEL1-LIKE (BLH) and KNOX TALE (KNAT) homeodomain transcription factors. This chain is Transcription repressor OFP7 (OFP7), found in Arabidopsis thaliana (Mouse-ear cress).